A 167-amino-acid polypeptide reads, in one-letter code: Small ribosomal subunit protein uS9 (167 aa).

2 disordered regions span residues 1–45 (MSEY…GGAT) and 137–167 (KAGF…FSKR). Acidic residues predominate over residues 9 to 19 (DTVEDITESDE). Residues 20-36 (FTGTYTSESSTPATGGN) are compositionally biased toward polar residues. Residues 143-152 (RDPRATERKK) show a composition bias toward basic and acidic residues. The span at 153–167 (AGLKKARKAPQFSKR) shows a compositional bias: basic residues.

This sequence belongs to the universal ribosomal protein uS9 family.

The polypeptide is Small ribosomal subunit protein uS9 (Kineococcus radiotolerans (strain ATCC BAA-149 / DSM 14245 / SRS30216)).